The sequence spans 273 residues: Glutamate racemase (273 aa).

Substrate contacts are provided by residues 10 to 11 and 42 to 43; these read DS and YG. Catalysis depends on Cys-73, which acts as the Proton donor/acceptor. Substrate is bound at residue 74–75; it reads NT. Residue Cys-184 is the Proton donor/acceptor of the active site. 185 to 186 is a binding site for substrate; that stretch reads TH.

This sequence belongs to the aspartate/glutamate racemases family.

It catalyses the reaction L-glutamate = D-glutamate. It functions in the pathway cell wall biogenesis; peptidoglycan biosynthesis. In terms of biological role, provides the (R)-glutamate required for cell wall biosynthesis. The chain is Glutamate racemase from Desulforudis audaxviator (strain MP104C).